The sequence spans 1022 residues: Sodium/potassium-transporting ATPase subunit alpha-1 (1022 aa).

A propeptide spanning residues 1-5 is cleaved from the precursor; it reads MGRGT. Over residues 1 to 10 the composition is skewed to basic and acidic residues; that stretch reads MGRGTGHDQY. The tract at residues 1-34 is disordered; it reads MGRGTGHDQYELAATSEGGRKKKRDKKKKDMDDL. Over 6 to 86 the chain is Cytoplasmic; sequence GHDQYELAAT…NALTPPPTTP (81 aa). Ser16 bears the Phosphoserine; by PKC mark. The interaction with phosphoinositide-3 kinase stretch occupies residues 81–83; the sequence is PPP. The helical transmembrane segment at 87–107 threads the bilayer; that stretch reads EWVKFCRQLFGGFSMLLWIGA. Topologically, residues 108 to 130 are extracellular; that stretch reads ILCFLAYGIQAASEDEPANDNLY. Residues 131–151 traverse the membrane as a helical segment; that stretch reads LGVVLSAVVIITGCFSYYQEA. Residues 152–287 lie on the Cytoplasmic side of the membrane; it reads KSSRIMDSFK…VGRTPISIEI (136 aa). Residues 213 to 234 are disordered; that stretch reads DNSSLTGESEPQTRSPDFSNEN. A helical transmembrane segment spans residues 288–307; sequence EHFIHIITGVAVFLGVSFFI. Over 308 to 319 the chain is Extracellular; it reads LSLILGYAWLEA. The helical transmembrane segment at 320 to 337 threads the bilayer; sequence VIFLIGIIVANVPEGLLA. Residues 338–771 are Cytoplasmic-facing; that stretch reads TVTVCLTLTA…EEGRLIFDNL (434 aa). Asp375 functions as the 4-aspartylphosphate intermediate in the catalytic mechanism. Lys486 contacts ATP. The Mg(2+) site is built by Asp716 and Asp720. The chain crosses the membrane as a helical span at residues 772-791; it reads KKSIAYTLTSNIPEITPFLL. Residues 792-801 are Extracellular-facing; that stretch reads FIIANIPLPL. A helical membrane pass occupies residues 802–822; the sequence is GTVTILCIDLGTDMVPAISLA. Residues 823–842 lie on the Cytoplasmic side of the membrane; that stretch reads YEAAESDIMKRQPRNPRTDK. The helical transmembrane segment at 843–865 threads the bilayer; that stretch reads LVNERLISIAYGQIGMMQATAGF. Residues 866–917 lie on the Extracellular side of the membrane; the sequence is FTYFVILAENGFLPSTLLGIRVKWDDKYVNDLEDSYGQQWTYEQRKIVEYTC. The chain crosses the membrane as a helical span at residues 918 to 937; it reads HTSFFASIVIVQWADLIICK. The Cytoplasmic portion of the chain corresponds to 938–950; it reads TRRNSIIQQGMKN. Ser942 bears the Phosphoserine; by PKA mark. Residues 951–969 form a helical membrane-spanning segment; it reads KILIFGLFEETALAAFLSY. Over 970 to 984 the chain is Extracellular; sequence CPGMDVALRMYPLKP. Residues 985–1005 form a helical membrane-spanning segment; the sequence is SWWFCAFPYSLLIFLYDEARR. Topologically, residues 1006–1022 are cytoplasmic; the sequence is FILRRNPDGWVERETYY.

This sequence belongs to the cation transport ATPase (P-type) (TC 3.A.3) family. Type IIC subfamily. In terms of assembly, the sodium/potassium-transporting ATPase is composed of a catalytic alpha subunit, an auxiliary non-catalytic beta subunit and an additional regulatory subunit.

The protein resides in the cell membrane. Its subcellular location is the sarcolemma. The catalysed reaction is K(+)(out) + Na(+)(in) + ATP + H2O = K(+)(in) + Na(+)(out) + ADP + phosphate + H(+). In terms of biological role, this is the catalytic component of the active enzyme, which catalyzes the hydrolysis of ATP coupled with the exchange of sodium and potassium ions across the plasma membrane. This action creates the electrochemical gradient of sodium and potassium ions, providing the energy for active transport of various nutrients. The polypeptide is Sodium/potassium-transporting ATPase subunit alpha-1 (atp1a1) (Anguilla anguilla (European freshwater eel)).